Here is a 380-residue protein sequence, read N- to C-terminus: Large ribosomal subunit protein mL38 (380 aa).

A mitochondrion-targeting transit peptide spans 1 to 26; it reads MAAPWWRAALCECRRWRGFSTSAVLG. A coiled-coil region spans residues 99-127; sequence RTQQLLERKQAIQELRANVEEERAARLRT.

This sequence belongs to the phosphatidylethanolamine-binding protein family. Mitochondrion-specific ribosomal protein mL38 subfamily. In terms of assembly, component of the mitochondrial large ribosomal subunit (mt-LSU). Mature mammalian 55S mitochondrial ribosomes consist of a small (28S) and a large (39S) subunit. The 28S small subunit contains a 12S ribosomal RNA (12S mt-rRNA) and 30 different proteins. The 39S large subunit contains a 16S rRNA (16S mt-rRNA), a copy of mitochondrial valine transfer RNA (mt-tRNA(Val)), which plays an integral structural role, and 52 different proteins. mL38 is located at the central protuberance.

It is found in the mitochondrion. This is Large ribosomal subunit protein mL38 (MRPL38) from Homo sapiens (Human).